We begin with the raw amino-acid sequence, 194 residues long: UPF0232 protein in recF-gyrB intergenic region (194 aa).

The span at 1–14 shows a compositional bias: acidic residues; the sequence is MTGPFDDDGPEEDA. The segment at 1-81 is disordered; the sequence is MTGPFDDDGP…GPGPDARDPQ (81 aa). Residues 30–52 are compositionally biased toward basic and acidic residues; the sequence is DLVRRTLEEARGAARSQGKDVGR.

It belongs to the UPF0232 family.

The protein is UPF0232 protein in recF-gyrB intergenic region of Mycolicibacterium smegmatis (Mycobacterium smegmatis).